A 648-amino-acid polypeptide reads, in one-letter code: Nucleoside triphosphatase I (648 aa).

The Helicase ATP-binding domain maps to 48–212 (FIGLKNLNSM…NNLIGLLRPN (165 aa)). 61–68 (WDTGMGKT) lines the ATP pocket. The short motif at 150–153 (DEVH) is the DEXH box element. Residues 378 to 541 (YIETCKIILN…KINVIFDLLK (164 aa)) form the Helicase C-terminal domain. The interval 467-533 (DIIILDMPWN…DIIKDKQGKI (67 aa)) is binding to the cap-specific mRNA (nucleoside-2'-O-)-methyltransferase.

The protein belongs to the helicase family. NPH I subfamily. In terms of assembly, monomer. Interacts (via C-terminus) with RAP94 (via N-terminus). Interacts with the cap-specific mRNA (nucleoside-2'-O-)-methyltransferase.

The protein localises to the virion. The enzyme catalyses a ribonucleoside 5'-triphosphate + H2O = a ribonucleoside 5'-diphosphate + phosphate + H(+). In terms of biological role, DNA-dependent ATPase required for providing the needed energy to achieve the termination of early transcripts. Acts in concert with the RAP94 subunit of the virion RNA polymerase and the capping enzyme/VTF to catalyze release of UUUUUNU-containing nascent RNA from the elongation complex. NPH-I must bind ssDNA in order to exhibit ATPase activity. The sequence is that of Nucleoside triphosphatase I (NPH1) from Amsacta (AmEPV).